The primary structure comprises 247 residues: 1-(5-phosphoribosyl)-5-[(5-phosphoribosylamino)methylideneamino] imidazole-4-carboxamide isomerase (247 aa).

Asp-8 (proton acceptor) is an active-site residue. Asp-129 acts as the Proton donor in catalysis.

It belongs to the HisA/HisF family.

Its subcellular location is the cytoplasm. The enzyme catalyses 1-(5-phospho-beta-D-ribosyl)-5-[(5-phospho-beta-D-ribosylamino)methylideneamino]imidazole-4-carboxamide = 5-[(5-phospho-1-deoxy-D-ribulos-1-ylimino)methylamino]-1-(5-phospho-beta-D-ribosyl)imidazole-4-carboxamide. It participates in amino-acid biosynthesis; L-histidine biosynthesis; L-histidine from 5-phospho-alpha-D-ribose 1-diphosphate: step 4/9. The protein is 1-(5-phosphoribosyl)-5-[(5-phosphoribosylamino)methylideneamino] imidazole-4-carboxamide isomerase of Rhodospirillum centenum (strain ATCC 51521 / SW).